Reading from the N-terminus, the 170-residue chain is Cathelicidin antimicrobial peptide (170 aa).

Residues 1–30 (MKTQRDSPSLGRWSLVLLLLGLVMPLAIVA) form the signal peptide. The propeptide at 31–131 (QVLSYQEAVL…DISCDKDNRR (101 aa)) is cathelin-like domain (CLD). 2 cysteine pairs are disulfide-bonded: Cys86–Cys97 and Cys108–Cys125. Positions 150-162 (LKKVGQKIKDFLG) are active core.

The protein belongs to the cathelicidin family. In terms of assembly, monomer, homodimer or homotrimer (in vitro). Oligomerizes as tetra- or hexamer in solution (in vitro). In terms of processing, proteolytically cleaved by proteinase PRTN3 into antibacterial peptide LL-37. Proteolytically cleaved by cathepsin CTSG and neutrophil elastase ELANE. Post-translationally, resistant to proteolytic degradation in solution, and when bound to both zwitterionic (mimicking mammalian membranes) and negatively charged membranes (mimicking bacterial membranes). After secretion onto the skin surface, the CAMP gene product is processed by a serine protease-dependent mechanism into multiple novel antimicrobial peptides distinct from and shorter than cathelicidin LL-37. These peptides show enhanced antimicrobial action, acquiring the ability to kill skin pathogens such as S.aureus, E.coli and C.albicans. These peptides have lost the ability to stimulate CXCL8/IL8 release from keratinocytes. The peptides act synergistically, killing bacteria at lower concentrations when present together, and maintain activity at increased salt condition.

It is found in the secreted. Its subcellular location is the vesicle. Antimicrobial protein that is an integral component of the innate immune system. Binds to bacterial lipopolysaccharides (LPS). Acts via neutrophil N-formyl peptide receptors to enhance the release of CXCL2. Postsecretory processing generates multiple cathelicidin antimicrobial peptides with various lengths which act as a topical antimicrobial defense in sweat on skin. The unprocessed precursor form, cathelicidin antimicrobial peptide, inhibits the growth of Gram-negative E.coli and E.aerogenes with efficiencies comparable to that of the mature peptide LL-37 (in vitro). In terms of biological role, antimicrobial peptide that is an integral component of the innate immune system. Binds to bacterial lipopolysaccharides (LPS). Causes membrane permeabilization by forming transmembrane pores (in vitro). Causes lysis of E.coli. Exhibits antimicrobial activity against Gram-negative bacteria such as P.aeruginosa, S.typhimurium, E.aerogenes, E.coli and P.syringae, Gram-positive bacteria such as L.monocytogenes, S.epidermidis, S.pyogenes and S.aureus, as well as vancomycin-resistant enterococci (in vitro). Exhibits antimicrobial activity against methicillin-resistant S.aureus, P.mirabilis, and C.albicans in low-salt media, but not in media containing 100 mM NaCl (in vitro). Forms chiral supramolecular assemblies with quinolone signal (PQS) molecules of P.aeruginosa, which may lead to interference of bacterial quorum signaling and perturbance of bacterial biofilm formation. May form supramolecular fiber-like assemblies on bacterial membranes. Induces cytokine and chemokine producation as well as TNF/TNFA and CSF2/GMCSF production in normal human keratinocytes. Exhibits hemolytic activity against red blood cells. Its function is as follows. Exhibits antimicrobial activity against E.coli and B.megaterium (in vitro). The protein is Cathelicidin antimicrobial peptide of Papio papio (Guinea baboon).